The chain runs to 193 residues: dCTP deaminase (193 aa).

Residues 110-115 (RSSLAR), Asp-128, 136-138 (VLE), Tyr-171, Lys-178, and Gln-182 contribute to the dCTP site. Residue Glu-138 is the Proton donor/acceptor of the active site. Positions 169 to 193 (RPYNRRQDAKYRDQQGAVASRIDKD) are disordered.

It belongs to the dCTP deaminase family. Homotrimer.

It catalyses the reaction dCTP + H2O + H(+) = dUTP + NH4(+). It functions in the pathway pyrimidine metabolism; dUMP biosynthesis; dUMP from dCTP (dUTP route): step 1/2. Functionally, catalyzes the deamination of dCTP to dUTP. In Cronobacter sakazakii (strain ATCC BAA-894) (Enterobacter sakazakii), this protein is dCTP deaminase.